Consider the following 213-residue polypeptide: Adenylyl-sulfate kinase (213 aa).

Residues 1 to 17 are compositionally biased toward basic and acidic residues; it reads MPAHQLDDHNQETRSDD. Residues 1-20 are disordered; sequence MPAHQLDDHNQETRSDDENI. Residue 47-54 participates in ATP binding; it reads GLSGSGKS. S121 functions as the Phosphoserine intermediate in the catalytic mechanism.

It belongs to the APS kinase family.

It catalyses the reaction adenosine 5'-phosphosulfate + ATP = 3'-phosphoadenylyl sulfate + ADP + H(+). The protein operates within sulfur metabolism; hydrogen sulfide biosynthesis; sulfite from sulfate: step 2/3. Catalyzes the synthesis of activated sulfate. The sequence is that of Adenylyl-sulfate kinase from Yersinia pestis.